The following is a 452-amino-acid chain: BUB3-interacting and GLEBS motif-containing protein ZNF207 (452 aa).

A microtubule-binding region region spans residues 1–92 (MGRKKKKQLK…EGIPEKDMEE (92 aa)). C2H2-type zinc fingers lie at residues 11–34 (PWCW…KAKH) and 35–58 (FKCH…MQVH). Disordered stretches follow at residues 99-131 (QKTQ…SFQQ) and 298-330 (STMS…TSAT). Acidic residues predominate over residues 113 to 123 (DDSDYDDDDDT). Residues 329-361 (ATSKLVHPDEDISLEEKRAQLPKYQRNLPRPGQ) form a GLEBS region.

In terms of assembly, interacts (via GLEBS region) with bub3.

It is found in the nucleus. The protein resides in the chromosome. It localises to the centromere. The protein localises to the kinetochore. Its subcellular location is the cytoplasm. It is found in the cytoskeleton. The protein resides in the spindle. Kinetochore- and microtubule-binding protein that plays a key role in spindle assembly. Znf207/BuGZ is mainly composed of disordered low-complexity regions and undergoes phase transition or coacervation to form temperature-dependent liquid droplets. Coacervation promotes microtubule bundling and concentrates tubulin, promoting microtubule polymerization and assembly of spindle and spindle matrix by concentrating its building blocks. The polypeptide is BUB3-interacting and GLEBS motif-containing protein ZNF207 (Xenopus laevis (African clawed frog)).